We begin with the raw amino-acid sequence, 165 residues long: Disulfide bond formation protein B (165 aa).

Topologically, residues 1–16 (MTILNSLNQFSKGRLS) are cytoplasmic. A helical transmembrane segment spans residues 17-33 (WLLLLLFVVFFEACALY). Over 34–51 (FQHVMMLAPCVMCIYERV) the chain is Periplasmic. The cysteines at positions 43 and 46 are disulfide-linked. Residues 52–67 (AMMGVGVAAIVGLMAP) traverse the membrane as a helical segment. The Cytoplasmic segment spans residues 68 to 74 (NNPIFRW). A helical membrane pass occupies residues 75–92 (LGLIGWGLSSYKGLLLAQ). Over 93–147 (QHVDYQFNPSPFATCDLFVTFPSWRPLNQWAPWIFEAYGDCSKIVWQFLDLSMPQ) the chain is Periplasmic. Cysteine 107 and cysteine 133 form a disulfide bridge. A helical membrane pass occupies residues 148–165 (WLVVIFAGNLIALALIVI).

The protein belongs to the DsbB family.

It localises to the cell inner membrane. Required for disulfide bond formation in some periplasmic proteins. Acts by oxidizing the DsbA protein. This Vibrio alginolyticus protein is Disulfide bond formation protein B.